Consider the following 899-residue polypeptide: Suppressor of glycerol defect protein 1 (899 aa).

Over residues Gln24–Gly33 the composition is skewed to basic and acidic residues. 2 disordered regions span residues Gln24–Pro181 and Glu248–Glu326. Positions Lys34 to Lys49 are enriched in basic residues. Residues Arg65–Thr77 show a composition bias toward polar residues. Acidic residues predominate over residues Asp103–Gly126. Composition is skewed to basic and acidic residues over residues Glu134–Lys143, Ser162–Asn174, and Ser251–Ser264. Acidic residues predominate over residues Ser265 to Asp292. Residues Ser335 to Arg540 enclose the MIF4G domain. The MI domain maps to Asp644 to Phe781. Position 736 is a phosphoserine (Ser736).

This sequence belongs to the CWC22 family. As to quaternary structure, interacts with PLC1.

It is found in the nucleus. The protein localises to the nucleolus. Involved in osmoregulatory glycerol response, probably through its interaction with PLC1 which regulates the expression of GDP1. The sequence is that of Suppressor of glycerol defect protein 1 (SGD1) from Saccharomyces cerevisiae (strain ATCC 204508 / S288c) (Baker's yeast).